The sequence spans 89 residues: Cell division topological specificity factor (89 aa).

This sequence belongs to the MinE family.

Its function is as follows. Prevents the cell division inhibition by proteins MinC and MinD at internal division sites while permitting inhibition at polar sites. This ensures cell division at the proper site by restricting the formation of a division septum at the midpoint of the long axis of the cell. This Klebsiella pneumoniae (strain 342) protein is Cell division topological specificity factor.